A 123-amino-acid polypeptide reads, in one-letter code: Small ribosomal subunit protein uS12 (123 aa).

At D89 the chain carries 3-methylthioaspartic acid. The tract at residues S104 to K123 is disordered. Residues D109–K123 show a composition bias toward basic residues.

The protein belongs to the universal ribosomal protein uS12 family. As to quaternary structure, part of the 30S ribosomal subunit. Contacts proteins S8 and S17. May interact with IF1 in the 30S initiation complex.

Its function is as follows. With S4 and S5 plays an important role in translational accuracy. Interacts with and stabilizes bases of the 16S rRNA that are involved in tRNA selection in the A site and with the mRNA backbone. Located at the interface of the 30S and 50S subunits, it traverses the body of the 30S subunit contacting proteins on the other side and probably holding the rRNA structure together. The combined cluster of proteins S8, S12 and S17 appears to hold together the shoulder and platform of the 30S subunit. The protein is Small ribosomal subunit protein uS12 of Pelobacter propionicus (strain DSM 2379 / NBRC 103807 / OttBd1).